The chain runs to 413 residues: Aspartate aminotransferase, cytoplasmic (413 aa).

L-aspartate is bound by residues G39 and W141. A Phosphoserine modification is found at S149. N195 provides a ligand contact to L-aspartate. Residue K259 is modified to N6-(pyridoxal phosphate)lysine. L-aspartate is bound at residue R387.

This sequence belongs to the class-I pyridoxal-phosphate-dependent aminotransferase family. As to quaternary structure, homodimer. The cofactor is pyridoxal 5'-phosphate.

Its subcellular location is the cytoplasm. It catalyses the reaction L-aspartate + 2-oxoglutarate = oxaloacetate + L-glutamate. The enzyme catalyses L-cysteine + 2-oxoglutarate = 2-oxo-3-sulfanylpropanoate + L-glutamate. The catalysed reaction is (2S)-2-aminobutanoate + 2-oxoglutarate = 2-oxobutanoate + L-glutamate. It carries out the reaction 3-sulfino-L-alanine + 2-oxoglutarate = 3-sulfinopyruvate + L-glutamate. In terms of biological role, biosynthesis of L-glutamate from L-aspartate or L-cysteine. Important regulator of levels of glutamate, the major excitatory neurotransmitter of the vertebrate central nervous system. Acts as a scavenger of glutamate in brain neuroprotection. The aspartate aminotransferase activity is involved in hepatic glucose synthesis during development and in adipocyte glyceroneogenesis. Using L-cysteine as substrate, regulates levels of mercaptopyruvate, an important source of hydrogen sulfide. Mercaptopyruvate is converted into H(2)S via the action of 3-mercaptopyruvate sulfurtransferase (3MST). Hydrogen sulfide is an important synaptic modulator and neuroprotectant in the brain. In addition, catalyzes (2S)-2-aminobutanoate, a by-product in the cysteine biosynthesis pathway. The chain is Aspartate aminotransferase, cytoplasmic from Homo sapiens (Human).